The sequence spans 142 residues: MPTPSMEDYIEQIYLLIDEKGYARVSDIAEALSVHPSSVTKMVQKLDKDEYLIYEKYRGLVLTTKGKKIGERLVYRHDLLEQFMRIIGVDESKIYNDVEGIEHHLSWEAIDRIGDLVQYFEQDAVRVETLRGVQRANEEKSN.

In terms of domain architecture, HTH dtxR-type spans 1–63 (MPTPSMEDYI…YEKYRGLVLT (63 aa)). Positions 8, 11, 77, 99, 102, and 103 each coordinate Mn(2+).

It belongs to the DtxR/MntR family. Homodimer.

The protein localises to the cytoplasm. Its activity is regulated as follows. DNA binding is strongly activated by Mn(2+). In terms of biological role, central regulator of manganese homeostasis. The protein is HTH-type transcriptional regulator MntR of Bacillus cereus (strain B4264).